Here is a 248-residue protein sequence, read N- to C-terminus: PF03932 family protein CutC (248 aa).

Belongs to the CutC family. As to quaternary structure, homodimer.

The protein localises to the cytoplasm. The protein is PF03932 family protein CutC of Salmonella schwarzengrund (strain CVM19633).